The sequence spans 158 residues: Proteinase inhibitor type-2 (158 aa).

A signal peptide spans 1–24 (MAIHKEVSFLAYLLVLGMLLFVSA). 2 consecutive repeat copies span residues 29-86 (DAKA…HPKN) and 87-146 (PKAC…IEPK). Cystine bridges form between Cys-33/Cys-121, Cys-37/Cys-117, Cys-45/Cys-127, Cys-57/Cys-94, Cys-60/Cys-78, Cys-61/Cys-90, Cys-67/Cys-103, and Cys-120/Cys-138.

This sequence belongs to the protease inhibitor I20 (potato type II proteinase inhibitor) family.

The chain is Proteinase inhibitor type-2 from Solanum tuberosum (Potato).